The chain runs to 137 residues: Small ribosomal subunit protein uS9 (137 aa).

The interval 103–137 (PPLKAEGYLTRDPRAKERKKYGLHKARKAPQYSKR) is disordered. The span at 118 to 137 (KERKKYGLHKARKAPQYSKR) shows a compositional bias: basic residues.

Belongs to the universal ribosomal protein uS9 family.

This Crocosphaera subtropica (strain ATCC 51142 / BH68) (Cyanothece sp. (strain ATCC 51142)) protein is Small ribosomal subunit protein uS9.